The primary structure comprises 497 residues: Paired box protein Pax-2-A (497 aa).

Positions 16 to 142 (GHGGVNQLGG…SSINRIIRTK (127 aa)) form a DNA-binding region, paired. The tract at residues 19-75 (GVNQLGGVFVNGRPLPDVVRQRIVELAHQGVRPCDISRQLRVSHGCVSKILGRYYET) is PAI subdomain. An RED subdomain region spans residues 94-142 (KVVDKIAEYKRQNPTMFAWEIRDRLLAEGICDNDTVPSVSSINRIIRTK). The tract at residues 143–224 (VQQPFHPTPD…GDSQSSVESL (82 aa)) is disordered. The span at 166–178 (VPSTASPPVSSAS) shows a compositional bias: low complexity.

As to expression, expression becomes spatially localized at mid-gastrula stages and is confined to the nervous system (midbrain, hindbrain, spinal cord), sensory organs (optic vesicle and stalk, otic vesicle), visceral arches, developing excretory system (pronephros, pronephric duct, rectal diverticulum, proctodaeum) and thyroid gland. Splicing does not appear to be tissue-specific and tissues displayed the same spectrum of splice variants.

It is found in the nucleus. In terms of biological role, probable transcription factor. Involved in kidney development, acting synergistically with lhx1/lim-1 in pronephric morphogenesis during the tailbud stages. This chain is Paired box protein Pax-2-A (pax2-a), found in Xenopus laevis (African clawed frog).